Consider the following 622-residue polypeptide: DNA mismatch repair protein MutL (622 aa).

Basic and acidic residues predominate over residues 399–414 (SSQNFHPDENDYRAEE). The tract at residues 399–422 (SSQNFHPDENDYRAEEASPAEENP) is disordered.

This sequence belongs to the DNA mismatch repair MutL/HexB family.

This protein is involved in the repair of mismatches in DNA. It is required for dam-dependent methyl-directed DNA mismatch repair. May act as a 'molecular matchmaker', a protein that promotes the formation of a stable complex between two or more DNA-binding proteins in an ATP-dependent manner without itself being part of a final effector complex. This Phocaeicola vulgatus (strain ATCC 8482 / DSM 1447 / JCM 5826 / CCUG 4940 / NBRC 14291 / NCTC 11154) (Bacteroides vulgatus) protein is DNA mismatch repair protein MutL.